A 687-amino-acid chain; its full sequence is TWiK family of potassium channels protein 12 (687 aa).

Topologically, residues 1–21 are cytoplasmic; that stretch reads MTLFQKLQWFCQLIRLRAYYK. A helical membrane pass occupies residues 22–42; it reads FLLLIAYTLFGAWLFRFYELQ. N-linked (GlcNAc...) asparagine glycans are attached at residues Asn53, Asn77, and Asn98. Positions 112–132 form an intramembrane region, pore-forming; sequence WTWTGAMFYAGQLYTTIGYGY. Residues 142-162 form a helical membrane-spanning segment; sequence ICTVLYALFGIPCFLMYLKAI. Residues 163 to 212 are Cytoplasmic-facing; it reads GKTLSKRLKKIYKRVRRSAFGKFLLPTRVTATKDGFEDPDASAEERKRKP. Residues 213 to 233 form a helical membrane-spanning segment; it reads FPIPIAIILLIIWICFSASMF. Residues 242 to 262 constitute an intramembrane region (pore-forming); the sequence is FPSAVYFFIVSISTVGLGDML. The helical transmembrane segment at 270-290 threads the bilayer; sequence VFNFLLILFGLALLSMCFELI. Over 291–687 the chain is Cytoplasmic; the sequence is TDRIAKWKQK…SKRDAPVNIV (397 aa). Residues 661 to 687 form a disordered region; sequence SPSTSTSTSMIDSGYDLSKRDAPVNIV. Over residues 677–687 the composition is skewed to basic and acidic residues; it reads LSKRDAPVNIV.

This sequence belongs to the two pore domain potassium channel (TC 1.A.1.8) family.

It is found in the membrane. In Caenorhabditis briggsae, this protein is TWiK family of potassium channels protein 12.